Consider the following 288-residue polypeptide: ATP synthase gamma chain (288 aa).

The protein belongs to the ATPase gamma chain family. In terms of assembly, F-type ATPases have 2 components, CF(1) - the catalytic core - and CF(0) - the membrane proton channel. CF(1) has five subunits: alpha(3), beta(3), gamma(1), delta(1), epsilon(1). CF(0) has three main subunits: a, b and c.

It is found in the cell inner membrane. Produces ATP from ADP in the presence of a proton gradient across the membrane. The gamma chain is believed to be important in regulating ATPase activity and the flow of protons through the CF(0) complex. The chain is ATP synthase gamma chain from Actinobacillus pleuropneumoniae serotype 5b (strain L20).